The sequence spans 99 residues: NADH-quinone oxidoreductase subunit K (99 aa).

3 helical membrane-spanning segments follow: residues 3–23, 28–48, and 59–79; these read VTAY…GVLI, IVVF…LVAF, and IAAF…LAII.

This sequence belongs to the complex I subunit 4L family. In terms of assembly, NDH-1 is composed of 14 different subunits. Subunits NuoA, H, J, K, L, M, N constitute the membrane sector of the complex.

Its subcellular location is the cell membrane. The catalysed reaction is a quinone + NADH + 5 H(+)(in) = a quinol + NAD(+) + 4 H(+)(out). Its function is as follows. NDH-1 shuttles electrons from NADH, via FMN and iron-sulfur (Fe-S) centers, to quinones in the respiratory chain. The immediate electron acceptor for the enzyme in this species is believed to be a menaquinone. Couples the redox reaction to proton translocation (for every two electrons transferred, four hydrogen ions are translocated across the cytoplasmic membrane), and thus conserves the redox energy in a proton gradient. In Nocardioides sp. (strain ATCC BAA-499 / JS614), this protein is NADH-quinone oxidoreductase subunit K.